The primary structure comprises 126 residues: NADP-reducing hydrogenase subunit HndB (126 aa).

Heterotetramer composed of HndA, HndB, HndC and HndD subunits. HndA and HndB could form a heterodimeric intermediate in the electron transfer between the active site of hydrogenase subunit HndD and the NADP reduction site of the reducing subunit HndC.

The enzyme catalyses H2 + NADP(+) = NADPH + H(+). With respect to regulation, inhibited by oxygen. Catalyzes the reduction of NADP in the presence of molecular H2 to yield NADPH. This is NADP-reducing hydrogenase subunit HndB (hndB) from Solidesulfovibrio fructosivorans (Desulfovibrio fructosivorans).